Reading from the N-terminus, the 431-residue chain is Gamma-glutamyl phosphate reductase (431 aa).

The protein belongs to the gamma-glutamyl phosphate reductase family.

The protein resides in the cytoplasm. The catalysed reaction is L-glutamate 5-semialdehyde + phosphate + NADP(+) = L-glutamyl 5-phosphate + NADPH + H(+). It participates in amino-acid biosynthesis; L-proline biosynthesis; L-glutamate 5-semialdehyde from L-glutamate: step 2/2. Its function is as follows. Catalyzes the NADPH-dependent reduction of L-glutamate 5-phosphate into L-glutamate 5-semialdehyde and phosphate. The product spontaneously undergoes cyclization to form 1-pyrroline-5-carboxylate. This chain is Gamma-glutamyl phosphate reductase, found in Trichodesmium erythraeum (strain IMS101).